The chain runs to 282 residues: Acyl-CoA-binding domain-containing protein 6 (282 aa).

The disordered stretch occupies residues M1 to T39. S41 bears the Phosphoserine mark. The region spanning L42–P127 is the ACB domain. Residues Y69–K73 and K95 each bind an acyl-CoA. S106 carries the post-translational modification Phosphoserine. Y114 contributes to the an acyl-CoA binding site. 2 ANK repeats span residues E191–C220 and E224–L253.

Monomer.

It localises to the cytoplasm. The protein localises to the nucleus. Binds long-chain acyl-coenzyme A molecules with a strong preference for unsaturated C18:1-CoA, lower affinity for unsaturated C20:4-CoA, and very weak affinity for saturated C16:0-CoA. Does not bind fatty acids. Plays a role in protein N-myristoylation. In Mus musculus (Mouse), this protein is Acyl-CoA-binding domain-containing protein 6 (Acbd6).